The chain runs to 540 residues: Membrane protein insertase YidC (540 aa).

5 helical membrane-spanning segments follow: residues 1–21 (MVVQNNFLFIAFIFVTFMMLD), 351–371 (NWGISIIIITFMVRGIMFPLT), 418–438 (LGGCMPLIIQMPIFLALYYML), 464–484 (ILPIIMGITMFLIQKISPSSI), and 497–517 (PLIFTIFFLWFPSGLVLYYII).

This sequence belongs to the OXA1/ALB3/YidC family. Type 1 subfamily. Interacts with the Sec translocase complex via SecD. Specifically interacts with transmembrane segments of nascent integral membrane proteins during membrane integration.

It is found in the cell membrane. In terms of biological role, required for the insertion and/or proper folding and/or complex formation of integral membrane proteins into the membrane. Involved in integration of membrane proteins that insert both dependently and independently of the Sec translocase complex, as well as at least some lipoproteins. Aids folding of multispanning membrane proteins. The chain is Membrane protein insertase YidC from Wigglesworthia glossinidia brevipalpis.